The primary structure comprises 2196 residues: Non-reducing polyketide synthase CTB1 (2196 aa).

Residues 11–250 (AFGDQTYDCS…TRLPITAPYH (240 aa)) form an N-terminal acylcarrier protein transacylase domain (SAT) region. The 434-residue stretch at 381-814 (KSPIAILAAS…GGNTCLVLED (434 aa)) folds into the Ketosynthase family 3 (KS3) domain. Active-site for beta-ketoacyl synthase activity residues include cysteine 553, histidine 688, and histidine 733. The tract at residues 922 to 1223 (AFTGQGSAFA…QTFASINKDK (302 aa)) is malonyl-CoA:ACP transacylase (MAT) domain. Positions 1298–1611 (SSSIHKVITN…VPKRLMHYIV (314 aa)) are product template (PT) domain. The interval 1302–1441 (HKVITNTITA…EKTALKSAAL (140 aa)) is N-terminal hotdog fold. One can recognise a PKS/mFAS DH domain in the interval 1302–1608 (HKVITNTITA…LQGVPKRLMH (307 aa)). Histidine 1335 (proton acceptor; for dehydratase activity) is an active-site residue. The C-terminal hotdog fold stretch occupies residues 1460–1608 (TYRFSKGMIY…LQGVPKRLMH (149 aa)). Catalysis depends on aspartate 1520, which acts as the Proton donor; for dehydratase activity. The tract at residues 1617 to 1666 (KASGPPTEKKTSSPPVEKKASAPVAPTRPAIQRKNASIPPPATQVTPQNK) is disordered. The span at 1623–1636 (TEKKTSSPPVEKKA) shows a compositional bias: basic and acidic residues. 2 Carrier domains span residues 1671–1748 (PSVS…TRLS) and 1775–1857 (DPSP…SGST). 2 positions are modified to O-(pantetheine 4'-phosphoryl)serine: serine 1708 and serine 1816. Residues 1856–1867 (STESFDSTTTKP) are compositionally biased toward polar residues. The segment at 1856 to 1923 (STESFDSTTT…PPKGRIPPAW (68 aa)) is disordered. Residues 1872-1887 (ATPPLTDSSASSPPSS) show a composition bias toward low complexity. Residues 1937 to 2187 (ILFLFPDGAG…SGAQMLVEHM (251 aa)) form a thioesterase (TE) domain region.

It depends on pantetheine 4'-phosphate as a cofactor.

It carries out the reaction 6 malonyl-CoA + acetyl-CoA + 6 H(+) = nor-toralactone + 6 CO2 + 7 CoA + 2 H2O. It functions in the pathway mycotoxin biosynthesis. In terms of biological role, polyketide synthase; part of the gene cluster that mediates the biosynthesis of cercosporin, a light-activated, non-host-selective toxin. The perylenequinone chromophore of cercosporin absorbs light energy to attain an electronically-activated triplet state and produces active oxygen species such as the hydroxyl radical, superoxide, hydrogen peroxide or singlet oxygen upon reaction with oxygen molecules. These reactive oxygen species cause damage to various cellular components including lipids, proteins and nucleic acids. The first step of cercosporin biosynthesis is performed by the polyketide synthase CTB1 which catalyzes the formation of nor-toralactone. The starter unit acyltransferase (SAT) domain of CTB1 initiates polyketide extension by the selective utilization of acetyl-CoA, which is elongated to the heptaketide in the beta-ketoacyl synthase (KS) domain by successive condensations with six malonyl units introduced by the malonyl acyltransferase (MAT) domain. The product template (PT) domain catalyzes C4-C9 and C2-C11 aldol cyclizations and dehydrations to a trihydroxynaphthalene, which is thought to be delivered to the thioesterase (TE) domain for product release. The bifunctional enzyme CTB3 then methylates nor-toralactone to toralactone before conducting an unusual oxidative aromatic ring opening. The O-methyltransferase CTB2 further methylates the nascent OH-6 of the CBT3 product, blocking further oxidation at this site before the reductase CTB6 reduces the 2-oxopropyl ketone at position C7, giving naphthalene. The FAD-dependent monooxygenase CTB5 in concert with the multicopper oxidase CTB12 are responsible for homodimerization of naphthalene with CTB7 installing the dioxepine moiety, finally producing cercosporin. The fasciclin domain-containing protein CTB11 might act with CTB5 and CTB12 whereas the roles of CTB9 and CTB10 have still to be elucidated. This is Non-reducing polyketide synthase CTB1 from Cercospora nicotianae (Barn spot disease fungus).